The chain runs to 558 residues: MARVEL domain-containing protein 2 (558 aa).

The span at 1–16 (MSNDGRSRNRDRRYDE) shows a compositional bias: basic and acidic residues. Disordered stretches follow at residues 1–58 (MSND…PPFG) and 115–145 (CSPPASPARPNHRSPLNSCKDPYGGSEGTFS). The Cytoplasmic portion of the chain corresponds to 1–194 (MSNDGRSRNR…YMKSWAGLLR (194 aa)). A compositionally biased stretch (pro residues) spans 45 to 58 (PLPPPPLPLQPPFG). Phosphoserine is present on residues S116, S120, and S161. Residue T166 is modified to Phosphothreonine. Residues 188–367 (SWAGLLRILG…SALVCLKLWR (180 aa)) enclose the MARVEL domain. The helical transmembrane segment at 195 to 215 (ILGVVELLLGAGVFACVTAYI) threads the bilayer. Residues 216 to 223 (HKDSEWYN) are Extracellular-facing. Residues 224 to 244 (LFGYSQPYGMGGVGGLGSMYG) traverse the membrane as a helical segment. The Cytoplasmic portion of the chain corresponds to 245–254 (GYYYTGPKTP). The chain crosses the membrane as a helical span at residues 255–275 (FVLVVAGLAWITTIIILVLGM). Residues 276 to 291 (SMYYRTILLDSNWWPL) are Extracellular-facing. A helical membrane pass occupies residues 292–312 (TEFGINVALFILYMAAAIVYV). Over 313 to 319 (NDTNRGG) the chain is Cytoplasmic. The chain crosses the membrane as a helical span at residues 320–337 (LCYYPLFNTPVNAVFCRV). Residues 338 to 341 (EGGQ) are Extracellular-facing. A helical transmembrane segment spans residues 342–362 (IAAMIFLFVTMIVYLISALVC). At 363-558 (LKLWRHEAAR…VMNWDVQGYS (196 aa)) the chain is on the cytoplasmic side. Residue S387 is modified to Phosphoserine. Residue K412 forms a Glycyl lysine isopeptide (Lys-Gly) (interchain with G-Cter in ubiquitin) linkage. A coiled-coil region spans residues 439-548 (MPDYVAKYPV…IKQRIQEYDK (110 aa)). Residues 440–551 (PDYVAKYPVI…RIQEYDKVMN (112 aa)) enclose the OCEL domain.

The protein belongs to the ELL/occludin family. As to quaternary structure, interacts with TJP1. Interacts with the ubiquitin ligase ITCH. Interacts (via C-terminal cytoplasmic domain) with LSR (via the cytoplasmic domain), ILDR1 and ILDR2; the interaction is required to recruit MARVELD2 to tricellular contacts. Ubiquitinated by ITCH; but this ubiquitination does not lead to proteasomal degradation. Polyubiquitinated at Lys-412 via 'Lys-63'-linked ubiquitin chains; deubiquitinated by USP53. In terms of processing, phosphorylated.

The protein localises to the cell membrane. It is found in the cell junction. It localises to the tight junction. Its function is as follows. Plays a role in the formation of tricellular tight junctions and of epithelial barriers. Required for normal hearing via its role in the separation of the endolymphatic and perilymphatic spaces of the organ of Corti in the inner ear, and for normal survival of hair cells in the organ of Corti. This is MARVEL domain-containing protein 2 from Homo sapiens (Human).